Here is a 427-residue protein sequence, read N- to C-terminus: UDP-N-acetylglucosamine 1-carboxyvinyltransferase (427 aa).

24–25 (KN) is a phosphoenolpyruvate binding site. Arg-95 is a UDP-N-acetyl-alpha-D-glucosamine binding site. Cys-119 acts as the Proton donor in catalysis. The residue at position 119 (Cys-119) is a 2-(S-cysteinyl)pyruvic acid O-phosphothioketal. UDP-N-acetyl-alpha-D-glucosamine-binding positions include 124 to 128 (RPVDQ), Asp-308, and Val-330.

This sequence belongs to the EPSP synthase family. MurA subfamily.

It is found in the cytoplasm. It carries out the reaction phosphoenolpyruvate + UDP-N-acetyl-alpha-D-glucosamine = UDP-N-acetyl-3-O-(1-carboxyvinyl)-alpha-D-glucosamine + phosphate. It functions in the pathway cell wall biogenesis; peptidoglycan biosynthesis. Functionally, cell wall formation. Adds enolpyruvyl to UDP-N-acetylglucosamine. In Deinococcus geothermalis (strain DSM 11300 / CIP 105573 / AG-3a), this protein is UDP-N-acetylglucosamine 1-carboxyvinyltransferase.